The sequence spans 63 residues: uncharacterized protein (63 aa).

Helical transmembrane passes span Val3 to Ile23 and Ala42 to Leu62.

It is found in the cell membrane. This is an uncharacterized protein from Bacillus subtilis (strain 168).